We begin with the raw amino-acid sequence, 429 residues long: CinA-like protein (429 aa).

Belongs to the CinA family.

In Prochlorococcus marinus (strain MIT 9313), this protein is CinA-like protein.